The following is a 957-amino-acid chain: MTQTLSQLENSGAFIERHIGPDAAQQQEMLNAVGAQSLNALTGQIVPKDIQLATPPQVGAPATEYAALAELKAIASRNKRFTSYIGMGYTAVQLPPVILRNMLENPGWYTAYTPYQPEVSQGRLEALLNFQQVTLDLTGLDMASASLLDEATAAAEAMAMAKRVSKLKNSNRFFVASDVHPQTLDVVRTRAETFGFEVIVDDAQKVLDHQDVFGVLLQQVGTTGEIHDYTALISELKSRKIVVSVAADIMALVLLTAPGKQGADIVFGSAQRFGVPMGYGGPHAAFFAAKDEYKRSMPGRIIGVSKDAAGNTALRMAMQTREQHIRREKANSNICTSQVLLANIASLYAVYHGPVGLKRIANRIHRLTDILAAGLQQKGLKLRHAHYFDTLCVEVADKAGVLARAEAAEINLRSDILNAVGITLDETTTRENVMQLFSVLLGDNHGLEIDTLDKDVAHDSRSIQPAMLRDDEILTHPVFNRYHSETEMMRYMHSLERKDLALNQAMIPLGSCTMKLNSAAEMIPITWPEFAELHPFCPPEQAEGYQQMIAQLADWLVKLTGYDAVCMQPNSGAQGEYAGLLAIRHYHESRNEGHRDICLIPASAHGTNPASAHMAGMQVVVVACDKNGNIDLTDLRAKAEQAGDNLSCIMVTYPSTHGVYEETIREVCEVVHQFGGQVYLDGANMNAQVGITSPGFIGADVSHLNLHKTFCIPHGGGGPGMGPIGVKAHLAPFVPGHSVVQIEGMLTRQGAVSAAPFGSASILPISWMYIRMMGAEGLKKASQVAILNANYIASRLQDAFPVLYTGRDGRVAHECILDIRPLKEETSISELDIAKRLIDYGFHAPTMSFPVAGTLMVEPTESESKVELDRFIDAMLAIRAEIDQVKAGVWPLEDNPLVNAPHIQSELVAEWAHPYSREVAVFPAGVADKYWPTVKRLDDVYGDRNLFCSCVPISEYQ.

Residue K708 is modified to N6-(pyridoxal phosphate)lysine.

The protein belongs to the GcvP family. As to quaternary structure, the glycine cleavage system is composed of four proteins: P, T, L and H. It depends on pyridoxal 5'-phosphate as a cofactor.

The catalysed reaction is N(6)-[(R)-lipoyl]-L-lysyl-[glycine-cleavage complex H protein] + glycine + H(+) = N(6)-[(R)-S(8)-aminomethyldihydrolipoyl]-L-lysyl-[glycine-cleavage complex H protein] + CO2. In terms of biological role, the glycine cleavage system catalyzes the degradation of glycine. The P protein binds the alpha-amino group of glycine through its pyridoxal phosphate cofactor; CO(2) is released and the remaining methylamine moiety is then transferred to the lipoamide cofactor of the H protein. This Shigella boydii serotype 18 (strain CDC 3083-94 / BS512) protein is Glycine dehydrogenase (decarboxylating).